The chain runs to 123 residues: Non-specific lipid-transfer protein 3 (123 aa).

Positions 1-25 (MASSGQLLKLVCLVAVMCCMAVGGP) are cleaved as a signal peptide. Intrachain disulfides connect cysteine 33–cysteine 80, cysteine 43–cysteine 57, cysteine 58–cysteine 105, and cysteine 78–cysteine 119.

Belongs to the plant LTP family.

Functionally, plant non-specific lipid-transfer proteins transfer phospholipids as well as galactolipids across membranes. May play a role in wax or cutin deposition in the cell walls of expanding epidermal cells and certain secretory tissues. This chain is Non-specific lipid-transfer protein 3, found in Prunus dulcis (Almond).